Consider the following 350-residue polypeptide: Biotin synthase (350 aa).

Positions Asn38–Ser257 constitute a Radical SAM core domain. The [4Fe-4S] cluster site is built by Cys53, Cys57, and Cys60. [2Fe-2S] cluster is bound by residues Cys97, Cys128, Cys188, and Arg260.

Belongs to the radical SAM superfamily. Biotin synthase family. In terms of assembly, homodimer. It depends on [4Fe-4S] cluster as a cofactor. Requires [2Fe-2S] cluster as cofactor.

The catalysed reaction is (4R,5S)-dethiobiotin + (sulfur carrier)-SH + 2 reduced [2Fe-2S]-[ferredoxin] + 2 S-adenosyl-L-methionine = (sulfur carrier)-H + biotin + 2 5'-deoxyadenosine + 2 L-methionine + 2 oxidized [2Fe-2S]-[ferredoxin]. It participates in cofactor biosynthesis; biotin biosynthesis; biotin from 7,8-diaminononanoate: step 2/2. Functionally, catalyzes the conversion of dethiobiotin (DTB) to biotin by the insertion of a sulfur atom into dethiobiotin via a radical-based mechanism. The polypeptide is Biotin synthase (Photobacterium profundum (strain SS9)).